A 132-amino-acid polypeptide reads, in one-letter code: L-ectoine synthase (132 aa).

This sequence belongs to the ectoine synthase family.

It carries out the reaction (2S)-4-acetamido-2-aminobutanoate = L-ectoine + H2O. Its pathway is amine and polyamine biosynthesis; ectoine biosynthesis; L-ectoine from L-aspartate 4-semialdehyde: step 3/3. In terms of biological role, catalyzes the circularization of gamma-N-acetyl-alpha,gamma-diaminobutyric acid (ADABA) to ectoine (1,4,5,6-tetrahydro-2-methyl-4-pyrimidine carboxylic acid), which is an excellent osmoprotectant. The sequence is that of L-ectoine synthase from Hahella chejuensis (strain KCTC 2396).